The chain runs to 69 residues: Amphipathic peptide OcyC2 (69 aa).

An N-terminal signal peptide occupies residues 1 to 23; the sequence is MKTQFAILMIAVVLMQMLVQTEG. The residue at position 37 (isoleucine 37) is an Isoleucine amide. The propeptide occupies 41–69; sequence GLKKLDQLDDTFDSDLSDADVKLLREMFK.

It belongs to the non-disulfide-bridged peptide (NDBP) superfamily. Short antimicrobial peptide (group 4) family. As to expression, expressed by the venom gland.

It is found in the secreted. Its subcellular location is the target cell membrane. Functionally, amphipathic peptide with antimicrobial activity. Shows antifungal activity with MIC values ranging from 25 to 200 uM. Does not show antifungal activity against Candida glabrata (ATCC90030) and Candida parapsilosis (ATCC22019) (MIC&gt;400 uM). The polypeptide is Amphipathic peptide OcyC2 (Opisthacanthus cayaporum (South American scorpion)).